A 155-amino-acid polypeptide reads, in one-letter code: Xanthine-guanine phosphoribosyltransferase (155 aa).

5-phospho-alpha-D-ribose 1-diphosphate contacts are provided by residues 37–38 and 91–99; these read RG and DDLVDTGNT. Asp92 is a Mg(2+) binding site. Guanine is bound by residues Asp95 and Ile138. Positions 95 and 138 each coordinate xanthine. GMP contacts are provided by residues 95–99 and 137–138; these read DTGNT and WI.

It belongs to the purine/pyrimidine phosphoribosyltransferase family. XGPT subfamily. Homotetramer. Mg(2+) is required as a cofactor.

The protein localises to the cell inner membrane. The enzyme catalyses GMP + diphosphate = guanine + 5-phospho-alpha-D-ribose 1-diphosphate. It carries out the reaction XMP + diphosphate = xanthine + 5-phospho-alpha-D-ribose 1-diphosphate. The catalysed reaction is IMP + diphosphate = hypoxanthine + 5-phospho-alpha-D-ribose 1-diphosphate. The protein operates within purine metabolism; GMP biosynthesis via salvage pathway; GMP from guanine: step 1/1. It functions in the pathway purine metabolism; XMP biosynthesis via salvage pathway; XMP from xanthine: step 1/1. Its function is as follows. Acts on guanine, xanthine and to a lesser extent hypoxanthine. In terms of biological role, purine salvage pathway enzyme that catalyzes the transfer of the ribosyl-5-phosphate group from 5-phospho-alpha-D-ribose 1-diphosphate (PRPP) to the N9 position of the 6-oxopurines guanine and xanthine to form the corresponding ribonucleotides GMP (guanosine 5'-monophosphate) and XMP (xanthosine 5'-monophosphate), with the release of PPi. To a lesser extent, also acts on hypoxanthine. The protein is Xanthine-guanine phosphoribosyltransferase of Haemophilus influenzae (strain ATCC 51907 / DSM 11121 / KW20 / Rd).